We begin with the raw amino-acid sequence, 373 residues long: S-adenosylmethionine:tRNA ribosyltransferase-isomerase (373 aa).

Belongs to the QueA family. Monomer.

The protein resides in the cytoplasm. The catalysed reaction is 7-aminomethyl-7-carbaguanosine(34) in tRNA + S-adenosyl-L-methionine = epoxyqueuosine(34) in tRNA + adenine + L-methionine + 2 H(+). Its pathway is tRNA modification; tRNA-queuosine biosynthesis. Transfers and isomerizes the ribose moiety from AdoMet to the 7-aminomethyl group of 7-deazaguanine (preQ1-tRNA) to give epoxyqueuosine (oQ-tRNA). The protein is S-adenosylmethionine:tRNA ribosyltransferase-isomerase of Prochlorococcus marinus (strain MIT 9515).